Reading from the N-terminus, the 693-residue chain is Putative adenosylcobalamin-dependent ribonucleoside-triphosphate reductase (693 aa).

C90 and C386 are disulfide-bonded. Active-site residues include C375 and E377.

Belongs to the class II ribonucleoside-triphosphate reductase family. Requires adenosylcob(III)alamin as cofactor.

The enzyme catalyses a 2'-deoxyribonucleoside 5'-triphosphate + [thioredoxin]-disulfide + H2O = a ribonucleoside 5'-triphosphate + [thioredoxin]-dithiol. This chain is Putative adenosylcobalamin-dependent ribonucleoside-triphosphate reductase (50), found in Mycobacterium phage D29 (Mycobacteriophage D29).